Consider the following 431-residue polypeptide: Adenylosuccinate synthetase (431 aa).

GTP is bound by residues 12–18 and 40–42; these read GDEGKGK and GHS. Catalysis depends on D13, which acts as the Proton acceptor. The Mg(2+) site is built by D13 and G40. Residues 13–16 and 38–41 contribute to the IMP site; these read DEGK and NAGH. H41 (proton donor) is an active-site residue. Residues 114–133 are disordered; that stretch reads QQQERDRSKNGEKIGTTNKG. The segment covering 115–125 has biased composition (basic and acidic residues); that stretch reads QQERDRSKNGE. Residues T130, R144, Q225, T240, and R304 each coordinate IMP. 300-306 lines the substrate pocket; sequence TVTKRPR. GTP-binding positions include R306, 332–334, and 414–416; these read CLD and SIG.

The protein belongs to the adenylosuccinate synthetase family. In terms of assembly, homodimer. Mg(2+) serves as cofactor.

It localises to the cytoplasm. It carries out the reaction IMP + L-aspartate + GTP = N(6)-(1,2-dicarboxyethyl)-AMP + GDP + phosphate + 2 H(+). Its pathway is purine metabolism; AMP biosynthesis via de novo pathway; AMP from IMP: step 1/2. Plays an important role in the de novo pathway of purine nucleotide biosynthesis. Catalyzes the first committed step in the biosynthesis of AMP from IMP. This Pediococcus pentosaceus (strain ATCC 25745 / CCUG 21536 / LMG 10740 / 183-1w) protein is Adenylosuccinate synthetase.